A 286-amino-acid chain; its full sequence is Pantothenate synthetase (286 aa).

Residue 30–37 coordinates ATP; it reads MGNLHRGH. The active-site Proton donor is the His-37. Gln-61 provides a ligand contact to (R)-pantoate. Beta-alanine is bound at residue Gln-61. 149 to 152 provides a ligand contact to ATP; sequence GEKD. Gln-155 lines the (R)-pantoate pocket. ATP contacts are provided by residues Val-178 and 186-189; that span reads LSSR.

It belongs to the pantothenate synthetase family. Homodimer.

It is found in the cytoplasm. It carries out the reaction (R)-pantoate + beta-alanine + ATP = (R)-pantothenate + AMP + diphosphate + H(+). It functions in the pathway cofactor biosynthesis; (R)-pantothenate biosynthesis; (R)-pantothenate from (R)-pantoate and beta-alanine: step 1/1. In terms of biological role, catalyzes the condensation of pantoate with beta-alanine in an ATP-dependent reaction via a pantoyl-adenylate intermediate. The protein is Pantothenate synthetase of Nitrosococcus oceani (strain ATCC 19707 / BCRC 17464 / JCM 30415 / NCIMB 11848 / C-107).